A 203-amino-acid polypeptide reads, in one-letter code: MNPEYDYLFKLLLIGDSGVGKSCLLLRFSDDSYVESYISTIGVDFKIRTVEQDGKTIKLQIWDTAGQERFRTITSSYYRGAHGIIIVYDVTDEESFNNVKQWLSEIDRYASDNVNKLLVGNKSDLTENRAIPYETAKAFADEIGIPFMETSAKDATNVEQAFMAMSASIKERMASQPAGNNARPPTVQIRGQPVAQKNGCCST.

GTP-binding positions include 15–23 (GDSGVGKSC), 33–40 (YVESYIST), 63–67 (DTAGQ), 121–124 (NKSD), and 151–153 (SAK). Residues 37–45 (YISTIGVDF) carry the Effector region motif. A disordered region spans residues 176 to 203 (QPAGNNARPPTVQIRGQPVAQKNGCCST). S-geranylgeranyl cysteine attachment occurs at residues Cys-200 and Cys-201.

The protein belongs to the small GTPase superfamily. Rab family. In terms of assembly, does not interact with GC5.

Its subcellular location is the golgi apparatus. It is found in the trans-Golgi network membrane. It localises to the golgi apparatus membrane. Functionally, protein transport. Regulator of membrane traffic from the Golgi apparatus towards the endoplasmic reticulum (ER). The protein is Ras-related protein RABD2a (RABD2A) of Arabidopsis thaliana (Mouse-ear cress).